Here is a 271-residue protein sequence, read N- to C-terminus: Phosphonates import ATP-binding protein PhnC 2 (271 aa).

The ABC transporter domain maps to 2–246 (LTVDNLEKTY…ARDEIYRGGE (245 aa)). Residue 35-42 (GPSGAGKS) coordinates ATP. Residues 243–254 (RGGESIADREEP) show a composition bias toward basic and acidic residues. Positions 243-271 (RGGESIADREEPSAGNSTDADDVIAERGD) are disordered.

It belongs to the ABC transporter superfamily. Phosphonates importer (TC 3.A.1.9.1) family. As to quaternary structure, the complex is composed of two ATP-binding proteins (PhnC), two transmembrane proteins (PhnE) and a solute-binding protein (PhnD).

The protein localises to the cell membrane. The catalysed reaction is phosphonate(out) + ATP + H2O = phosphonate(in) + ADP + phosphate + H(+). Its function is as follows. Part of the ABC transporter complex PhnCDE involved in phosphonates import. Responsible for energy coupling to the transport system. In Haloarcula marismortui (strain ATCC 43049 / DSM 3752 / JCM 8966 / VKM B-1809) (Halobacterium marismortui), this protein is Phosphonates import ATP-binding protein PhnC 2.